Reading from the N-terminus, the 385-residue chain is Urotensin-2 receptor (385 aa).

Topologically, residues 1-53 (MALSLESTSFPMLAVSRSTASELPGGFNVSHNSSWTGPTDPSSLQDLVATGVI) are extracellular. Residues Asn-28 and Asn-32 are each glycosylated (N-linked (GlcNAc...) asparagine). A helical transmembrane segment spans residues 54–76 (GAVLSTMGVVGVVGNVYTLVVMC). The Cytoplasmic portion of the chain corresponds to 77–86 (RFLRASASMY). A helical membrane pass occupies residues 87 to 112 (VYVVNLALADLLYLLSIPFIVATYVT). Over 113–123 (KDWHFGDVGCR) the chain is Extracellular. Cys-122 and Cys-198 are disulfide-bonded. Residues 124-145 (VLFSLDFLTMHASIFTLTIMSS) traverse the membrane as a helical segment. Residues 146–166 (ERYAAVLRPLDTVQRSKGYRK) are Cytoplasmic-facing. Residues 167–185 (LLALGTWLLALLLTLPMML) traverse the membrane as a helical segment. The Extracellular segment spans residues 186 to 208 (AIRLVRRGSKSLCLPAWGPRAHR). The helical transmembrane segment at 209–231 (TYLTLLFGTSIVGPGLVIGLLYI) threads the bilayer. Topologically, residues 232-257 (RLARAYWLSQQASFKQTRRLPNPRVL) are cytoplasmic. Residues 258-283 (YLILGIVLLFWACFLPFWLWQLLAQY) traverse the membrane as a helical segment. Topologically, residues 284 to 298 (HQAMPLTPETARIIN) are extracellular. Residues 299–320 (YLTACLTYGNSCINPFLYTLLT) form a helical membrane-spanning segment. At 321-385 (KNYREYLRGR…SPVPPNGAFV (65 aa)) the chain is on the cytoplasmic side.

This sequence belongs to the G-protein coupled receptor 1 family.

It is found in the cell membrane. In terms of biological role, high affinity receptor for urotensin-2 and urotensin-2B. The activity of this receptor is mediated by a G-protein that activate a phosphatidylinositol-calcium second messenger system. This is Urotensin-2 receptor (Uts2r) from Mus musculus (Mouse).